A 389-amino-acid polypeptide reads, in one-letter code: S-adenosylmethionine synthase (389 aa).

H17 is an ATP binding site. Position 19 (D19) interacts with Mg(2+). E45 contacts K(+). 2 residues coordinate L-methionine: E58 and Q101. The segment at 101-111 is flexible loop; that stretch reads QSPDISQGVTE. Residues 168-170, 234-235, D243, 249-250, A266, and K270 each bind ATP; these read DSK, RF, and RK. D243 contacts L-methionine. K274 contributes to the L-methionine binding site.

The protein belongs to the AdoMet synthase family. In terms of assembly, homotetramer; dimer of dimers. Requires Mg(2+) as cofactor. It depends on K(+) as a cofactor.

Its subcellular location is the cytoplasm. It carries out the reaction L-methionine + ATP + H2O = S-adenosyl-L-methionine + phosphate + diphosphate. It functions in the pathway amino-acid biosynthesis; S-adenosyl-L-methionine biosynthesis; S-adenosyl-L-methionine from L-methionine: step 1/1. In terms of biological role, catalyzes the formation of S-adenosylmethionine (AdoMet) from methionine and ATP. The overall synthetic reaction is composed of two sequential steps, AdoMet formation and the subsequent tripolyphosphate hydrolysis which occurs prior to release of AdoMet from the enzyme. The polypeptide is S-adenosylmethionine synthase (Syntrophotalea carbinolica (strain DSM 2380 / NBRC 103641 / GraBd1) (Pelobacter carbinolicus)).